Consider the following 350-residue polypeptide: Solute carrier family 35 member E4 (350 aa).

The next 8 membrane-spanning stretches (helical) occupy residues 40–60 (VLGQ…LLAG), 79–99 (PLLL…WGAQ), 110–130 (VLLL…GLST), 135–155 (LAQL…ALLL), 218–238 (VTLL…AALV), 258–278 (VLLS…LLAL), 279–299 (TSAL…LILS), and 301–321 (LLFG…TLSG). An EamA domain is found at 125-179 (NVGLSTVPLDLAQLATTTTPLFTLALSALLLGRRHHPLQFAAMGPLCLGAACSLA).

The protein belongs to the TPT transporter family. SLC35E subfamily.

Its subcellular location is the membrane. Functionally, putative transporter. The chain is Solute carrier family 35 member E4 (Slc35e4) from Rattus norvegicus (Rat).